The sequence spans 427 residues: Serine--tRNA ligase (427 aa).

236–238 is a binding site for L-serine; sequence TAE. 267–269 serves as a coordination point for ATP; sequence RRE. Glu-290 is an L-serine binding site. Residue 354-357 coordinates ATP; it reads EISS. An L-serine-binding site is contributed by Ser-390.

It belongs to the class-II aminoacyl-tRNA synthetase family. Type-1 seryl-tRNA synthetase subfamily. In terms of assembly, homodimer. The tRNA molecule binds across the dimer.

Its subcellular location is the cytoplasm. The enzyme catalyses tRNA(Ser) + L-serine + ATP = L-seryl-tRNA(Ser) + AMP + diphosphate + H(+). The catalysed reaction is tRNA(Sec) + L-serine + ATP = L-seryl-tRNA(Sec) + AMP + diphosphate + H(+). The protein operates within aminoacyl-tRNA biosynthesis; selenocysteinyl-tRNA(Sec) biosynthesis; L-seryl-tRNA(Sec) from L-serine and tRNA(Sec): step 1/1. In terms of biological role, catalyzes the attachment of serine to tRNA(Ser). Is also able to aminoacylate tRNA(Sec) with serine, to form the misacylated tRNA L-seryl-tRNA(Sec), which will be further converted into selenocysteinyl-tRNA(Sec). In Picosynechococcus sp. (strain ATCC 27264 / PCC 7002 / PR-6) (Agmenellum quadruplicatum), this protein is Serine--tRNA ligase.